A 769-amino-acid polypeptide reads, in one-letter code: 5-methyltetrahydropteroyltriglutamate--homocysteine methyltransferase (769 aa).

5-methyltetrahydropteroyltri-L-glutamate is bound by residues 16–19 and Lys121; that span reads RELK. The disordered stretch occupies residues 415–450; it reads SMTERDSPHSSRSPLQREALDLPTLPTTTIGSFPQT. Polar residues predominate over residues 439–449; it reads LPTTTIGSFPQ. Residues 444–446 and Glu497 contribute to the L-homocysteine site; that span reads IGS. Residues 444–446 and Glu497 each bind L-methionine; that span reads IGS. Residues 528-529 and Trp574 contribute to the 5-methyltetrahydropteroyltri-L-glutamate site; that span reads RC. Residue Asp612 participates in L-homocysteine binding. Asp612 serves as a coordination point for L-methionine. Glu618 is a binding site for 5-methyltetrahydropteroyltri-L-glutamate. His654, Cys656, and Glu678 together coordinate Zn(2+). The Proton donor role is filled by His707. Cys739 provides a ligand contact to Zn(2+).

The protein belongs to the vitamin-B12 independent methionine synthase family. It depends on Zn(2+) as a cofactor.

It carries out the reaction 5-methyltetrahydropteroyltri-L-glutamate + L-homocysteine = tetrahydropteroyltri-L-glutamate + L-methionine. The protein operates within amino-acid biosynthesis; L-methionine biosynthesis via de novo pathway; L-methionine from L-homocysteine (MetE route): step 1/1. In terms of biological role, catalyzes the transfer of a methyl group from 5-methyltetrahydrofolate to homocysteine resulting in methionine formation. In Salinibacter ruber (strain DSM 13855 / M31), this protein is 5-methyltetrahydropteroyltriglutamate--homocysteine methyltransferase.